Reading from the N-terminus, the 189-residue chain is Leucine repeat adapter protein 25 (189 aa).

The residue at position 28 (Ser-28) is a Phosphoserine. The interval 55–81 is disordered; that stretch reads LSRAARAPDGPRHAAGSANLGSAAGPR. The segment covering 68–79 has biased composition (low complexity); the sequence is AAGSANLGSAAG. One copy of the LRR repeat lies at 86–114; the sequence is LDSALAALRKEMVGLRQLDMSLLCQLWGL. The segment at 141–174 is disordered; sequence DSSYPPDAGLSDDDEPPDASLPPDPPPLTVPQTH. Residues 159-169 show a composition bias toward pro residues; sequence ASLPPDPPPLT. A Phosphoserine modification is found at Ser-188.

This sequence belongs to the FAM89 family. Interacts with SKI. Interacts (via LRR repeat) with CDC42BPA (via AGC-kinase C-terminal domain) and CDC42BPB (via AGC-kinase C-terminal domain). Interacts (via LRR repeat) with LIMK1 (via LIM zinc-binding domains). Forms a tripartite complex with CDC42BPA, CDC42BPB and LIMK1.

It localises to the cytoplasm. The protein resides in the cell projection. The protein localises to the lamellipodium. Negatively regulates TGF-beta-induced signaling; in cooperation with SKI prevents the translocation of SMAD2 from the nucleus to the cytoplasm in response to TGF-beta. Acts as an adapter that mediates the specific recognition of LIMK1 by CDC42BPA and CDC42BPB in the lamellipodia. LRAP25-mediated CDC42BPA/CDC42BPB targeting to LIMK1 and the lamellipodium results in LIMK1 activation and the subsequent phosphorylation of CFL1 which is important for lamellipodial F-actin regulation. In Rattus norvegicus (Rat), this protein is Leucine repeat adapter protein 25.